The primary structure comprises 178 residues: Large ribosomal subunit protein uL6 (178 aa).

It belongs to the universal ribosomal protein uL6 family. As to quaternary structure, part of the 50S ribosomal subunit.

In terms of biological role, this protein binds to the 23S rRNA, and is important in its secondary structure. It is located near the subunit interface in the base of the L7/L12 stalk, and near the tRNA binding site of the peptidyltransferase center. This chain is Large ribosomal subunit protein uL6, found in Corynebacterium jeikeium (strain K411).